The primary structure comprises 169 residues: MKKITTGLIIVVAAIIVLSIQFMTESGPFKSAGLSNANEQTYKVIRVIDGDTIIVDKDGKQQNLRMIGVDTPETVKPNTPVQPYGKEASDFTKRHLTNQKVRLEYDKQEKDRYGRTLAYVWLGKEMFNEKLAKEGLARAKFYRPNYKYQERIEQAQKQAQKLKKNIWSN.

The N-terminal stretch at 1 to 26 is a signal peptide; the sequence is MKKITTGLIIVVAAIIVLSIQFMTES. Catalysis depends on residues arginine 65, glutamate 73, and arginine 115.

Belongs to the thermonuclease family. Requires Ca(2+) as cofactor.

The protein localises to the secreted. The enzyme catalyses Endonucleolytic cleavage to nucleoside 3'-phosphates and 3'-phosphooligonucleotide end-products.. Its function is as follows. Enzyme that catalyzes the hydrolysis of both DNA and RNA at the 5'-position of the phosphodiester bond. In Staphylococcus hyicus, this protein is Thermonuclease (nucH).